The sequence spans 85 residues: MNISKFEQRTLHALARGGLIRVEKDDKGKIHTATCVTREGWLLADCTVATFRRLRKRRLIASKDGSPYRITREGLHAVRAQLDNR.

Belongs to the UPF0386 family.

This is UPF0386 protein Plav_1374 from Parvibaculum lavamentivorans (strain DS-1 / DSM 13023 / NCIMB 13966).